The chain runs to 510 residues: Light-independent protochlorophyllide reductase subunit B (510 aa).

D36 is a [4Fe-4S] cluster binding site. Catalysis depends on D296, which acts as the Proton donor. Position 431 to 432 (431 to 432 (GM)) interacts with substrate.

Belongs to the ChlB/BchB/BchZ family. As to quaternary structure, protochlorophyllide reductase is composed of three subunits; ChlL, ChlN and ChlB. Forms a heterotetramer of two ChlB and two ChlN subunits. [4Fe-4S] cluster is required as a cofactor.

It localises to the plastid. The protein resides in the chloroplast. The catalysed reaction is chlorophyllide a + oxidized 2[4Fe-4S]-[ferredoxin] + 2 ADP + 2 phosphate = protochlorophyllide a + reduced 2[4Fe-4S]-[ferredoxin] + 2 ATP + 2 H2O. The protein operates within porphyrin-containing compound metabolism; chlorophyll biosynthesis (light-independent). In terms of biological role, component of the dark-operative protochlorophyllide reductase (DPOR) that uses Mg-ATP and reduced ferredoxin to reduce ring D of protochlorophyllide (Pchlide) to form chlorophyllide a (Chlide). This reaction is light-independent. The NB-protein (ChlN-ChlB) is the catalytic component of the complex. This Chlorokybus atmophyticus (Soil alga) protein is Light-independent protochlorophyllide reductase subunit B.